A 58-amino-acid chain; its full sequence is uncharacterized protein (58 aa).

The protein resides in the plastid. Its subcellular location is the chloroplast. This is an uncharacterized protein from Porphyra purpurea (Red seaweed).